Reading from the N-terminus, the 280-residue chain is Pyridoxal 5'-phosphate synthase subunit PdxS (280 aa).

Residue Asp-12 participates in D-ribose 5-phosphate binding. Lys-69 (schiff-base intermediate with D-ribose 5-phosphate) is an active-site residue. D-ribose 5-phosphate is bound at residue Gly-141. Arg-153 provides a ligand contact to D-glyceraldehyde 3-phosphate. D-ribose 5-phosphate-binding positions include Gly-202 and 223-224 (GS).

Belongs to the PdxS/SNZ family. In terms of assembly, in the presence of PdxT, forms a dodecamer of heterodimers.

It catalyses the reaction aldehydo-D-ribose 5-phosphate + D-glyceraldehyde 3-phosphate + L-glutamine = pyridoxal 5'-phosphate + L-glutamate + phosphate + 3 H2O + H(+). It functions in the pathway cofactor biosynthesis; pyridoxal 5'-phosphate biosynthesis. Catalyzes the formation of pyridoxal 5'-phosphate from ribose 5-phosphate (RBP), glyceraldehyde 3-phosphate (G3P) and ammonia. The ammonia is provided by the PdxT subunit. Can also use ribulose 5-phosphate and dihydroxyacetone phosphate as substrates, resulting from enzyme-catalyzed isomerization of RBP and G3P, respectively. The polypeptide is Pyridoxal 5'-phosphate synthase subunit PdxS (Fusobacterium nucleatum subsp. nucleatum (strain ATCC 25586 / DSM 15643 / BCRC 10681 / CIP 101130 / JCM 8532 / KCTC 2640 / LMG 13131 / VPI 4355)).